A 201-amino-acid chain; its full sequence is NAD(P)H dehydrogenase (quinone) (201 aa).

One can recognise a Flavodoxin-like domain in the interval 7-192 (ILVLYYSMYG…SIARYQGEYV (186 aa)). FMN contacts are provided by residues 13-18 (SMYGHI) and 81-83 (TRF). Tyrosine 15 contributes to the NAD(+) binding site. Tryptophan 101 serves as a coordination point for substrate. Residues 116–121 (STGTGG) and histidine 136 contribute to the FMN site.

This sequence belongs to the WrbA family. It depends on FMN as a cofactor.

The catalysed reaction is a quinone + NADH + H(+) = a quinol + NAD(+). The enzyme catalyses a quinone + NADPH + H(+) = a quinol + NADP(+). The chain is NAD(P)H dehydrogenase (quinone) from Shigella sonnei (strain Ss046).